The sequence spans 194 residues: MYLDQIKAELVEAQDVLNKFISDENNIKLIQEAALLISNSFKQGGKVLSCGNGGSHCDAMHFAEELTGRYRENRPGYPAIAISDASHLSCVSNDFGYEYVFSRYVEAVGQKGDVLFGLSTSGNSKNILNAIEAAKAKGMKVIAMTGKDGGKMAGLADVEIRVPHFRYADRIQEIHIKVIHILMMLIEFEMAKQA.

One can recognise an SIS domain in the interval 37–194 (ISNSFKQGGK…LIEFEMAKQA (158 aa)). 52 to 54 (NGG) serves as a coordination point for substrate. Residues H61 and E65 each coordinate Zn(2+). Substrate is bound by residues E65, 93–94 (ND), 119–121 (STS), S124, and Q172. Residues Q172 and H180 each coordinate Zn(2+).

It belongs to the SIS family. GmhA subfamily. As to quaternary structure, homotetramer. Zn(2+) is required as a cofactor.

The protein resides in the cytoplasm. The enzyme catalyses 2 D-sedoheptulose 7-phosphate = D-glycero-alpha-D-manno-heptose 7-phosphate + D-glycero-beta-D-manno-heptose 7-phosphate. It participates in carbohydrate biosynthesis; D-glycero-D-manno-heptose 7-phosphate biosynthesis; D-glycero-alpha-D-manno-heptose 7-phosphate and D-glycero-beta-D-manno-heptose 7-phosphate from sedoheptulose 7-phosphate: step 1/1. In terms of biological role, catalyzes the isomerization of sedoheptulose 7-phosphate in D-glycero-D-manno-heptose 7-phosphate. This chain is Phosphoheptose isomerase, found in Haemophilus influenzae (strain PittGG).